Reading from the N-terminus, the 346-residue chain is Phenylalanine--tRNA ligase alpha subunit (346 aa).

Glu-264 provides a ligand contact to Mg(2+).

The protein belongs to the class-II aminoacyl-tRNA synthetase family. Phe-tRNA synthetase alpha subunit type 1 subfamily. As to quaternary structure, tetramer of two alpha and two beta subunits. Requires Mg(2+) as cofactor.

The protein localises to the cytoplasm. It catalyses the reaction tRNA(Phe) + L-phenylalanine + ATP = L-phenylalanyl-tRNA(Phe) + AMP + diphosphate + H(+). The chain is Phenylalanine--tRNA ligase alpha subunit from Leifsonia xyli subsp. xyli (strain CTCB07).